The primary structure comprises 670 residues: Rhophilin-1 (670 aa).

A disordered region spans residues M1–Q20. In terms of domain architecture, REM-1 spans D23 to P97. S24 is modified (phosphoserine). Residues P108 to E457 enclose the BRO1 domain. One can recognise a PDZ domain in the interval P513–P592. The segment at Q616–P670 is disordered. Residues P652–P661 are compositionally biased toward pro residues.

This sequence belongs to the RHPN family. As to quaternary structure, binds specifically to GTP-Rho. Interacts with ROPN1.

Functionally, has no enzymatic activity. May serve as a target for Rho, and interact with some cytoskeletal component upon Rho binding or relay a Rho signal to other molecules. The polypeptide is Rhophilin-1 (Homo sapiens (Human)).